Consider the following 73-residue polypeptide: UPF0337 protein lp_1708 (73 aa).

Composition is skewed to basic and acidic residues over residues 1–35 (MSDV…REAQ) and 44–73 (KAKD…KSDD). The interval 1 to 73 (MSDVNKKFDS…KDKMKKKSDD (73 aa)) is disordered.

This sequence belongs to the UPF0337 (CsbD) family.

The sequence is that of UPF0337 protein lp_1708 from Lactiplantibacillus plantarum (strain ATCC BAA-793 / NCIMB 8826 / WCFS1) (Lactobacillus plantarum).